Here is a 582-residue protein sequence, read N- to C-terminus: MSSSLGKEKDSKEKDPKVPSAKEREKEAKASGGFGKESKEKEPKTKGKDAKDGKKESSAAQPGVAFSVDNTIKRPNPALGTRKKSSNAEVTKELNKCREENSMRLDLSKRSIHILPPSVKELTQLTELYLYSNKLQSLPAEVGCLVNLMTLALSENSLTSLPDSLDNLKKLRMLDLRHNKLREIPSVVYRLDSLTTLYLRFNRITAVEKDVRNLPRLSTLSIRENKIKQLPAEIGELCNLITLDVAHNQLEHLPKEIGNCTQITNLDLQHNELLDLPDTIGNLSSLNRLGLRYNRLSAIPRSLAKCSALEELNLENNNISTLPESLLSSLVKLNSLTLARNCFQLYPVGGPSQFSTIYSLNMEHNRINKIPFGIFSRAKVLSKLNMKDNQLTSLPLDFGTWTSMVELNLATNQLTKIPEDVSGLVSLEVLILSNNLLKKLPHGLGNLRKLRELDLEENKLESLPNEIAYLKDLQKLVLTNNQLTTLPRGIGHLTNLTHLGLGENLLTHLPEEIGTLENLEELYLNDNPNLHSLPFELALCSKLSIMSIENCPLSHLPPQIVAGGPSFIIQFLKMQGPYRAMV.

2 stretches are compositionally biased toward basic and acidic residues: residues Met1 to Lys29 and Lys36 to Ser57. The disordered stretch occupies residues Met1 to Val90. Positions Gly63–Phe66 match the RVxF motif; important for interaction with PP1c motif. LRR repeat units follow at residues Asn101–Leu122, Gln124–Leu145, Asn147–Lys169, Lys170–Leu191, Ser193–Pro215, Arg216–Leu237, Asn239–Cys260, Gln262–Leu283, Ser285–Ser307, Ala308–Ser329, Lys332–Gln353, Thr356–Arg377, Val380–Thr400, Ser403–Leu424, Ser426–Arg448, Lys449–Leu470, Asp472–Thr494, Asn495–Leu516, Asn518–Cys540, and Lys542–Gly563.

This sequence belongs to the SHOC2 family. In terms of assembly, component of the SHOC2-MRAS-PP1c (SMP) complex consisting of SHOC2, GTP-bound M-Ras/MRAS and the catalytic subunit of protein phosphatase 1 (either PPP1CA, PPP1CB or PPP1CC). SHOC2 and PP1c preferably bind M-Ras/MRAS, but they also bind K-Ras/KRAS, N-Ras/NRAS and H-Ras/HRAS; these interactions are GTP-dependent and both SHOC2 and PP1c are required to form a stable complex. Interacts with PP1c in the absence of Ras GTPases. Interacts with M-Ras/MRAS and RAF1. Interacts with ERBIN; disrupts the interaction with RAF1 and Ras, preventing the activation of the Ras signaling pathway. Interacts with LZTR1.

The protein resides in the cytoplasm. It is found in the nucleus. Core component of the SHOC2-MRAS-PP1c (SMP) holophosphatase complex that regulates activation of the MAPK pathway. Acts as a scaffolding protein in the SMP complex. The SMP complex specifically dephosphorylates the inhibitory phosphorylation at 'Ser-259' of RAF1 kinase, 'Ser-365' of BRAF kinase and 'Ser-214' of ARAF kinase, stimulating their kinase activities. The SMP complex enhances the dephosphorylation activity and substrate specificity of PP1c. In Rattus norvegicus (Rat), this protein is Leucine-rich repeat protein SHOC-2 (Shoc2).